A 334-amino-acid chain; its full sequence is S-adenosylmethionine decarboxylase proenzyme 1 (334 aa).

Phenylalanine 7 contributes to the substrate binding site. Residues glutamate 8 and glutamate 11 contribute to the active site. Glutamate 67 contacts substrate. Serine 68 acts as the Schiff-base intermediate with substrate; via pyruvic acid in catalysis. Serine 68 carries the pyruvic acid (Ser); by autocatalysis modification. Catalysis depends on cysteine 82, which acts as the Proton donor; for catalytic activity. Substrate is bound at residue phenylalanine 223. Active-site proton acceptor; for processing activity residues include serine 229 and histidine 243. Glutamate 247 provides a ligand contact to substrate. Position 298 is a phosphoserine (serine 298).

Belongs to the eukaryotic AdoMetDC family. In terms of assembly, heterotetramer of two alpha and two beta chains. Requires pyruvate as cofactor. In terms of processing, is synthesized initially as an inactive proenzyme. Formation of the active enzyme involves a self-maturation process in which the active site pyruvoyl group is generated from an internal serine residue via an autocatalytic post-translational modification. Two non-identical subunits are generated from the proenzyme in this reaction, and the pyruvate is formed at the N-terminus of the alpha chain, which is derived from the carboxyl end of the proenzyme. The post-translation cleavage follows an unusual pathway, termed non-hydrolytic serinolysis, in which the side chain hydroxyl group of the serine supplies its oxygen atom to form the C-terminus of the beta chain, while the remainder of the serine residue undergoes an oxidative deamination to produce ammonia and the pyruvoyl group blocking the N-terminus of the alpha chain. In terms of tissue distribution, expressed in embryonic stem cells; subsequently down-regulated in differentiating neural precursor cells.

It catalyses the reaction S-adenosyl-L-methionine + H(+) = S-adenosyl 3-(methylsulfanyl)propylamine + CO2. It functions in the pathway amine and polyamine biosynthesis; S-adenosylmethioninamine biosynthesis; S-adenosylmethioninamine from S-adenosyl-L-methionine: step 1/1. Its function is as follows. Essential for biosynthesis of the polyamines spermidine and spermine. Promotes maintenance and self-renewal of embryonic stem cells, by maintaining spermine levels. This chain is S-adenosylmethionine decarboxylase proenzyme 1 (Amd1), found in Mus musculus (Mouse).